Here is a 904-residue protein sequence, read N- to C-terminus: Protein abrupt (904 aa).

Residues 1 to 15 (MTESTQLQTAENNNA) are compositionally biased toward polar residues. Disordered regions lie at residues 1–30 (MTES…TSSV) and 53–72 (GSAL…HQQQ). The BTB domain maps to 103 to 168 (VDVTLACDER…MYNGEVNVSH (66 aa)). Over residues 204 to 238 (SHNSSNNNNNNSSSNNSLSNNNNNNNNNAESSNHN) the composition is skewed to low complexity. Disordered regions lie at residues 204–287 (SHNS…LNSP), 349–390 (ASSA…PPPQ), 411–438 (LLDR…KDRE), and 451–501 (ALEN…NQRS). The segment covering 239 to 253 (KISSYLSPNQTSAAC) has biased composition (polar residues). A compositionally biased stretch (low complexity) spans 254–286 (NNSSNSNSNNHSSSHNNSSSNNISGSLNSSLNS). Over residues 429-438 (SGRDTSKDRE) the composition is skewed to basic and acidic residues. Over residues 452-461 (LENSNGQQAN) the composition is skewed to polar residues. Ser-474 carries the post-translational modification Phosphoserine. The span at 481–500 (PSDRGDGQHDGTLDGIDNQR) shows a compositional bias: basic and acidic residues. C2H2-type zinc fingers lie at residues 544-567 (RPCP…EDKH) and 573-596 (YRCV…SRQH). Disordered stretches follow at residues 633–696 (ELRA…GGSS) and 832–904 (AAGN…VHNT). Over residues 642–655 (GGSGSSGGGGGGGS) the composition is skewed to gly residues. Residues 671 to 682 (DDAEDSDDDPED) show a composition bias toward acidic residues. Phosphoserine occurs at positions 837, 846, and 868. The segment covering 851–868 (MGHDEMAENDGDMRREGS) has biased composition (basic and acidic residues). Residues 876 to 886 (DNNQSGSNHEV) show a composition bias toward polar residues. 2 positions are modified to phosphoserine: Ser-889 and Ser-896.

As to expression, expressed in CNS midline cells during embryonic stages 9-13. Expression also seen in cells of the stomagastric nervous system. Segmentally repeated stripes of ectodermal expression appear at stage 11 that become uniform by stage 12 and throughout embryogenesis. Expressed at variable levels in somatic muscles from stage 16 and in all imaginal disks during larval development. Expression is seen in da neurons that grow in two-dimensional dendrites underneath the epidermis during late embryonic, larval, and pupal stages.

Its subcellular location is the nucleus. Expression is vital for development; may be involved in transcriptional regulation. In embryos, muscle specific expression is required for segmental nerve b (SNb) motoneuron target recognition within ventral longitudinal muscles. Has a role in establishing and maintaining embryonic muscle attachments, adult sensory cell formation (macrochaetae) and morphogenesis of adult appendages (legs, antenna aristae and male external genitalia). Has a role in the morphogenesis of the class I dendritic neurons: selective expression of ab in class I da neurons plays a pivotal role in forming dendritic arbors, which are characteristic of the class I cells. The development of more complex arbors of class II-IV neurons depends on the absence of ab. In Drosophila melanogaster (Fruit fly), this protein is Protein abrupt (ab).